A 305-amino-acid chain; its full sequence is MSNLPFTVAALYCFAPLPQYESLREPLAKLCCSNGIKGTLLLAAEGINGTVAGTPQAIEKLVQHITAIPGLADPELKYSHATEMPFHRMKVRLKREIVTMGVDGIDPLKSVGTYIAPQDWNALIADENTVVVDTRNDYEYAIGTFEGALDPQTKTFREFPEWVEQNRDKLEGKKIAMFCTGGIRCEKATAFVKGLGFDDVFHLKGGILKYLEEVPREDSMWNGECFVFDERVAVGHGLAESDVELCRACRRPISPEDKLSQFFEEGVSCAGCYDERTPEDRARYAERQKQVKLAEMRGAHKHIGS.

A Rhodanese domain is found at 125–219 (ADENTVVVDT…YLEEVPREDS (95 aa)). The Cysteine persulfide intermediate role is filled by C179.

Belongs to the TrhO family.

The catalysed reaction is uridine(34) in tRNA + AH2 + O2 = 5-hydroxyuridine(34) in tRNA + A + H2O. Functionally, catalyzes oxygen-dependent 5-hydroxyuridine (ho5U) modification at position 34 in tRNAs. The chain is tRNA uridine(34) hydroxylase from Brucella anthropi (strain ATCC 49188 / DSM 6882 / CCUG 24695 / JCM 21032 / LMG 3331 / NBRC 15819 / NCTC 12168 / Alc 37) (Ochrobactrum anthropi).